The primary structure comprises 206 residues: MILSDKDIFDYVNSKRVLIEPFNSKFVGPCSYDVTLGSEFIKYKEDVYDLKKSLSHNKFEIENSIMVCPLNHHLDETIIENYKEKYNVDCIVSGGLLGTTNEYVELPNDVCAQYQGRSSFGRVFLQTHQTAGWIDSGFRGKITLEIVAYDKPVILYKNQRVGQLIFSKSLSPADVGYSDRKYSKYAGQKSVMASLIKKDFEIDEEE.

DCTP is bound by residues 117–122, aspartate 135, 143–145, glutamine 163, tyrosine 177, lysine 184, and glutamine 188; these read RSSFGR and TLE. Glutamate 145 (proton donor/acceptor) is an active-site residue.

Belongs to the dCTP deaminase family. In terms of assembly, homotrimer.

The enzyme catalyses dCTP + 2 H2O = dUMP + NH4(+) + diphosphate. The protein operates within pyrimidine metabolism; dUMP biosynthesis; dUMP from dCTP: step 1/1. Bifunctional enzyme that catalyzes both the deamination of dCTP to dUTP and the hydrolysis of dUTP to dUMP without releasing the toxic dUTP intermediate. In Methanococcus maripaludis (strain C7 / ATCC BAA-1331), this protein is dCTP deaminase, dUMP-forming.